Reading from the N-terminus, the 225-residue chain is Glutathione S-transferase zeta class (225 aa).

One can recognise a GST N-terminal domain in the interval 10 to 91 (PKLKLYSYFR…YLEEKYPEHP (82 aa)). Residues 20–25 (SSCSFR), glutamine 49, valine 63, 75–76 (DS), glutamine 115, and 119–121 (NLA) each bind glutathione. A GST C-terminal domain is found at 96–221 (DIHKKAINYQ…MPDKQPDSTS (126 aa)).

Belongs to the GST superfamily. Zeta family.

The protein localises to the cytoplasm. The catalysed reaction is RX + glutathione = an S-substituted glutathione + a halide anion + H(+). In Euphorbia esula (Leafy spurge), this protein is Glutathione S-transferase zeta class.